A 182-amino-acid chain; its full sequence is UPF0316 protein Sde_0566 (182 aa).

Transmembrane regions (helical) follow at residues 7 to 27, 41 to 61, and 67 to 87; these read VAPE…VSLG, LAAF…GQVF, and WYLA…GMWI.

The protein belongs to the UPF0316 family.

The protein resides in the cell membrane. This chain is UPF0316 protein Sde_0566, found in Saccharophagus degradans (strain 2-40 / ATCC 43961 / DSM 17024).